The chain runs to 856 residues: Rab effector MyRIP (856 aa).

Residues lysine 4–asparagine 124 enclose the RabBD domain. The segment at cysteine 63 to cysteine 105 adopts an FYVE-type zinc-finger fold. Positions lysine 143–threonine 560 are myosin-binding. A PKA-binding region spans residues valine 193–alanine 209. Residues leucine 232–glutamine 248 form a negative regulation of PKA-binding region. The disordered stretch occupies residues lysine 251–alanine 287. Phosphoserine is present on serine 299. Residues threonine 302–alanine 311 are compositionally biased toward polar residues. 6 disordered regions span residues threonine 302–glutamine 323, glutamine 350–serine 376, tyrosine 392–glutamate 578, serine 592–glycine 625, arginine 778–valine 805, and leucine 826–leucine 845. Serine 351 bears the Phosphoserine mark. Over residues leucine 395–tyrosine 405 the composition is skewed to acidic residues. Composition is skewed to low complexity over residues proline 427 to proline 437 and serine 450 to serine 460. Residues phenylalanine 495 to tyrosine 856 are actin-binding. Composition is skewed to polar residues over residues alanine 551–aspartate 574, glutamine 613–glycine 625, arginine 784–serine 793, and leucine 826–lysine 843.

Binds MYO5A, MYO7A and F-actin. Binds RAB27A that has been activated by GTP-binding via its N-terminus. Interacts with PRKAR2A. Interacts with components of the exocyst complex, including EXOC3 and EXOC4.

It is found in the cytoplasm. It localises to the perinuclear region. The protein localises to the cytoplasmic vesicle. Its subcellular location is the secretory vesicle. The protein resides in the melanosome. In terms of biological role, rab effector protein involved in melanosome transport. Serves as link between melanosome-bound RAB27A and the motor proteins MYO5A and MYO7A. May link RAB27A-containing vesicles to actin filaments. Functions as a protein kinase A-anchoring protein (AKAP). May act as a scaffolding protein that links PKA to components of the exocytosis machinery, thus facilitating exocytosis, including insulin release. The chain is Rab effector MyRIP (Myrip) from Rattus norvegicus (Rat).